The chain runs to 418 residues: Serine hydroxymethyltransferase (418 aa).

(6S)-5,6,7,8-tetrahydrofolate is bound by residues Leu121 and 125-127; that span reads GHL. An N6-(pyridoxal phosphate)lysine modification is found at Lys230. 356–358 is a binding site for (6S)-5,6,7,8-tetrahydrofolate; sequence SPF.

It belongs to the SHMT family. In terms of assembly, homodimer. Requires pyridoxal 5'-phosphate as cofactor.

The protein localises to the cytoplasm. The catalysed reaction is (6R)-5,10-methylene-5,6,7,8-tetrahydrofolate + glycine + H2O = (6S)-5,6,7,8-tetrahydrofolate + L-serine. The protein operates within one-carbon metabolism; tetrahydrofolate interconversion. It participates in amino-acid biosynthesis; glycine biosynthesis; glycine from L-serine: step 1/1. Its function is as follows. Catalyzes the reversible interconversion of serine and glycine with tetrahydrofolate (THF) serving as the one-carbon carrier. This reaction serves as the major source of one-carbon groups required for the biosynthesis of purines, thymidylate, methionine, and other important biomolecules. Also exhibits THF-independent aldolase activity toward beta-hydroxyamino acids, producing glycine and aldehydes, via a retro-aldol mechanism. This chain is Serine hydroxymethyltransferase, found in Shewanella piezotolerans (strain WP3 / JCM 13877).